The primary structure comprises 250 residues: Manganese transport system ATP-binding protein MntB (250 aa).

The ABC transporter domain maps to 4–236; that stretch reads VELDNVTVAY…NLQKTYGGRL (233 aa). 36–43 lines the ATP pocket; sequence GPNGAGKS.

It belongs to the ABC transporter superfamily. In terms of assembly, the complex is probably composed of two ATP-binding proteins (MntB), two transmembrane proteins (MntC and MntD) and a solute-binding protein (MntA).

The protein localises to the cell membrane. Probably part of the ABC transporter complex MntABCD involved in manganese import. Probably responsible for energy coupling to the transport system. The chain is Manganese transport system ATP-binding protein MntB from Bacillus subtilis (strain 168).